Here is a 77-residue protein sequence, read N- to C-terminus: Neurexophilin-4 (77 aa).

Positions 1 to 77 (NCHVEYEKTN…NFQSEHPYFG (77 aa)) are v (Cys-rich).

The protein belongs to the neurexophilin family. Post-translationally, may be proteolytically processed at the boundary between the N-terminal non-conserved and the central conserved domain in neuron-like cells.

The protein localises to the secreted. Its function is as follows. May be signaling molecules that resemble neuropeptides and that act by binding to alpha-neurexins and possibly other receptors. The chain is Neurexophilin-4 (NXPH4) from Macaca mulatta (Rhesus macaque).